The sequence spans 276 residues: Adenylate kinase (276 aa).

Residue 38–43 participates in ATP binding; sequence GSGKGT. Residues 58–87 form an NMP region; that stretch reads STGDMLRAAIEQGTETGKQAKTIMDQGGLV. Residues threonine 59, arginine 64, 85-87, 113-116, and glutamine 120 each bind AMP; these read GLV and GFPR. The segment at 154–191 is LID; the sequence is GRLVHPSSGRSYHREFFPPKVDMIDDITGEPLIQRSDD. Residues arginine 155 and 164–165 each bind ATP; that span reads SY. AMP contacts are provided by arginine 188 and arginine 199. Position 227 (lysine 227) interacts with ATP.

Belongs to the adenylate kinase family. AK2 subfamily. Monomer.

The protein localises to the cytoplasm. It is found in the cytosol. The protein resides in the mitochondrion intermembrane space. It carries out the reaction AMP + ATP = 2 ADP. Functionally, catalyzes the reversible transfer of the terminal phosphate group between ATP and AMP. Plays an important role in cellular energy homeostasis and in adenine nucleotide metabolism. Adenylate kinase activity is critical for regulation of the phosphate utilization and the AMP de novo biosynthesis pathways. This is Adenylate kinase (adkA) from Dictyostelium discoideum (Social amoeba).